The primary structure comprises 457 residues: Putative purine-cytosine permease YxlA (457 aa).

The next 12 helical transmembrane spans lie at 24-44 (FPVWFGANMHITTLVTGTIPV), 50-70 (LFWSVAAIICGTLIGAIFMAS), 90-110 (FGVIGAILPLFLVMFIYLGFF), 127-147 (IPGSWSIIGLSAVCFLLTIFG), 164-184 (AVFFAATILIFQLPIPAGSWI), 192-212 (IFLVAVSAVATWQLAYAPYVA), 228-248 (FWYSYAGTSVSSIWMMLLGAL), 264-284 (IVQLFGPFSFIMLIIVLFGQM), 316-336 (IIMILGVTLVGTVLSLLGQSN), 341-361 (FLNFIFFISYFLIPWTAINLV), 392-412 (IAFVLSILLEIPFINTSFYIG), and 420-440 (GGDIAWIIGLAVPSVLYYVLM).

Belongs to the purine-cytosine permease (2.A.39) family.

It is found in the cell membrane. In Bacillus subtilis (strain 168), this protein is Putative purine-cytosine permease YxlA (yxlA).